The primary structure comprises 314 residues: Thymidylate synthase (314 aa).

Residues arginine 32 and 176–177 contribute to the dUMP site; that span reads RR. The active-site Nucleophile is the cysteine 196. Residues 216–219, asparagine 227, and 257–259 contribute to the dUMP site; these read RSCD and HLY. Aspartate 219 is a (6R)-5,10-methylene-5,6,7,8-tetrahydrofolate binding site. A (6R)-5,10-methylene-5,6,7,8-tetrahydrofolate-binding site is contributed by alanine 313.

This sequence belongs to the thymidylate synthase family. Bacterial-type ThyA subfamily. Homodimer.

It is found in the cytoplasm. It catalyses the reaction dUMP + (6R)-5,10-methylene-5,6,7,8-tetrahydrofolate = 7,8-dihydrofolate + dTMP. It participates in pyrimidine metabolism; dTTP biosynthesis. In terms of biological role, catalyzes the reductive methylation of 2'-deoxyuridine-5'-monophosphate (dUMP) to 2'-deoxythymidine-5'-monophosphate (dTMP) while utilizing 5,10-methylenetetrahydrofolate (mTHF) as the methyl donor and reductant in the reaction, yielding dihydrofolate (DHF) as a by-product. This enzymatic reaction provides an intracellular de novo source of dTMP, an essential precursor for DNA biosynthesis. The protein is Thymidylate synthase of Novosphingobium aromaticivorans (strain ATCC 700278 / DSM 12444 / CCUG 56034 / CIP 105152 / NBRC 16084 / F199).